Consider the following 218-residue polypeptide: MGRLLAFVVGAALVSSAWGGCVEVDSETEAVYGMTFKILCISCKRRSETTAETFTEWTFRQKGTEEFVKILRYENEVLQLEEDERFEGRVVWNGSRGTKDLQDLSIFITNVTYNHSGDYQCHVYRLLSFENYEHNTSVVKKIHLEVVDKANRDMASIVSEIMMYVLIVVLTIWLVAEMVYCYKKIAAATEAAAQENASEYLAITSESKENCTGVQVAE.

An N-terminal signal peptide occupies residues 1 to 18 (MGRLLAFVVGAALVSSAW). Residues 19–157 (GGCVEVDSET…DKANRDMASI (139 aa)) are Extracellular-facing. 2 disulfide bridges follow: cysteine 21/cysteine 43 and cysteine 40/cysteine 121. Positions 22–150 (VEVDSETEAV…KIHLEVVDKA (129 aa)) constitute an Ig-like C2-type domain. Asparagine 93, asparagine 110, asparagine 114, and asparagine 135 each carry an N-linked (GlcNAc...) asparagine glycan. Residues 158-179 (VSEIMMYVLIVVLTIWLVAEMV) form a helical membrane-spanning segment. At 180–218 (YCYKKIAAATEAAAQENASEYLAITSESKENCTGVQVAE) the chain is on the cytoplasmic side.

Belongs to the sodium channel auxiliary subunit SCN1B (TC 8.A.17) family. A voltage-gated sodium (Nav) channel consists of an ion-conducting pore-forming alpha subunit functional on its own that is regulated by one or more beta subunits. Interacts with SCN1A; regulatory subunit of SCN1A/Nav1.1. Interacts with SCN3A; regulatory subunit of SCN3A/Nav1.3. Interacts with SCN4A; regulatory subunit of SCN4A/Nav1.4. Interacts with SCN5A; regulatory subunit of SCN5A/Nav1.5. Interacts with SCN8A; regulatory subunit of SCN8A/Nav1.6. Interacts with SCN9A; regulatory subunit of SCN9A/Nav1.7. Interacts with SCN10A; regulatory subunit of SCN10A/Nav1.8. Interacts with NFASC. Interacts with TMEM65.

The protein resides in the cell membrane. Its subcellular location is the perikaryon. It localises to the cell projection. The protein localises to the axon. In terms of biological role, regulatory subunit of multiple voltage-gated sodium (Nav) channels directly mediating the depolarization of excitable membranes. Navs, also called VGSCs (voltage-gated sodium channels) or VDSCs (voltage-dependent sodium channels), operate by switching between closed and open conformations depending on the voltage difference across the membrane. In the open conformation they allow Na(+) ions to selectively pass through the pore, along their electrochemical gradient. The influx of Na+ ions provokes membrane depolarization, initiating the propagation of electrical signals throughout cells and tissues. The accessory beta subunits participate in localization and functional modulation of the Nav channels. Modulates the activity of SCN1A/Nav1.1, SCN2A/Nav1.2, SCN3A/Nav1.3, SCN4A/Nav1.4, SCN5A/Nav1.5, SCN8A/Nav1.6, SCN9A/Nav1.7 and SCN10A/Nav1.8. The polypeptide is Sodium channel regulatory subunit beta-1 (Oryctolagus cuniculus (Rabbit)).